The chain runs to 540 residues: Anti-sigma-I factor RsgI7 (540 aa).

In terms of domain architecture, RsgI N-terminal anti-sigma spans 1–48; sequence MRAMVVDMNDKYAVVVNKEGQYIKIKRKAEHRLGYQVELPDRVIGFER. Over 1–50 the chain is Cytoplasmic; it reads MRAMVVDMNDKYAVVVNKEGQYIKIKRKAEHRLGYQVELPDRVIGFERRT. Residues 51–73 traverse the membrane as a helical segment; it reads LLKVVSVAAALLIVSSISFAVYS. The Extracellular segment spans residues 74–540; sequence YNLPYSYVNV…PGKEILKKRC (467 aa). Composition is skewed to basic and acidic residues over residues 238-256, 319-329, 338-351, 359-370, and 398-419; these read DIKK…KKVN, SGIDKGNKDSK, NDVK…KTNS, VSKDNKNDKADG, and SKDD…EDNK. Disordered regions lie at residues 238 to 429 and 481 to 540; these read DIKK…CPQY and QEEQ…KKRC. Residues 451 to 501 are a coiled coil; that stretch reads KEDMTKQNDEWFKKMQEEQKKQYDEWLKKMQEEQKKQHDEWVKKMEEMKNT.

Interacts (via RsgI N-terminal anti-sigma domain) with SigI7.

It localises to the cell membrane. In terms of biological role, anti-sigma factor for SigI7. Negatively regulates SigI7 activity through direct interaction. The protein is Anti-sigma-I factor RsgI7 of Acetivibrio thermocellus (strain ATCC 27405 / DSM 1237 / JCM 9322 / NBRC 103400 / NCIMB 10682 / NRRL B-4536 / VPI 7372) (Clostridium thermocellum).